Here is a 302-residue protein sequence, read N- to C-terminus: 4-hydroxy-tetrahydrodipicolinate synthase (302 aa).

Position 44 (T44) interacts with pyruvate. Y132 serves as the catalytic Proton donor/acceptor. K160 (schiff-base intermediate with substrate) is an active-site residue. V202 contacts pyruvate.

Belongs to the DapA family. As to quaternary structure, homotetramer; dimer of dimers.

It is found in the cytoplasm. It carries out the reaction L-aspartate 4-semialdehyde + pyruvate = (2S,4S)-4-hydroxy-2,3,4,5-tetrahydrodipicolinate + H2O + H(+). It functions in the pathway amino-acid biosynthesis; L-lysine biosynthesis via DAP pathway; (S)-tetrahydrodipicolinate from L-aspartate: step 3/4. Functionally, catalyzes the condensation of (S)-aspartate-beta-semialdehyde [(S)-ASA] and pyruvate to 4-hydroxy-tetrahydrodipicolinate (HTPA). The protein is 4-hydroxy-tetrahydrodipicolinate synthase of Thermomicrobium roseum (strain ATCC 27502 / DSM 5159 / P-2).